A 152-amino-acid chain; its full sequence is Regulator of G-protein signaling 21 (152 aa).

In terms of domain architecture, RGS spans 21–137; sequence NMDTLLANQA…LKSEIYKKLV (117 aa).

In terms of tissue distribution, expressed ubiquitously.

In terms of biological role, inhibits signal transduction by increasing the GTPase activity of G protein alpha subunits thereby driving them into their inactive GDP-bound form. The chain is Regulator of G-protein signaling 21 (RGS21) from Homo sapiens (Human).